A 357-amino-acid polypeptide reads, in one-letter code: Arginine kinase (357 aa).

The Phosphagen kinase N-terminal domain maps to 9 to 91; sequence KLEAGFKKLQ…FDPIIDDYHG (83 aa). 64–68 contacts substrate; it reads GVGIY. In terms of domain architecture, Phosphagen kinase C-terminal spans 119-356; the sequence is FIISTRVRCG…LEMIKMEKAA (238 aa). ATP contacts are provided by residues 122–126 and H185; that span reads STRVR. E225 provides a ligand contact to substrate. R229 is a binding site for ATP. C271 lines the substrate pocket. Residues 280–284 and 309–314 each bind ATP; these read RASVH and RGTRGE. E314 serves as a coordination point for substrate.

Belongs to the ATP:guanido phosphotransferase family. As to quaternary structure, monomer.

Its subcellular location is the cytoplasm. The enzyme catalyses L-arginine + ATP = N(omega)-phospho-L-arginine + ADP + H(+). Its function is as follows. Catalyzes the reversible transfer of the terminal phosphoryl group of ATP to L-arginine. The chain is Arginine kinase from Limulus polyphemus (Atlantic horseshoe crab).